The chain runs to 62 residues: Large ribosomal subunit protein bL28 (62 aa).

This sequence belongs to the bacterial ribosomal protein bL28 family.

The polypeptide is Large ribosomal subunit protein bL28 (Streptococcus equi subsp. equi (strain 4047)).